Consider the following 383-residue polypeptide: MASCERSLLPIDIIEEICCRIPVEYLTQFKLTCKQWFALLKDKRFIYKYLDLFQEQERFIRIDRIVQIIDPVKGARSSSPIPQEFDNVAQISTMVHCDGLLLCRCKNERSRSYKLAVWNPFLSRVKWIEPMDFYSSNDFYGFGYDNVCRDEYKLLRIFDGEIEDESEIAGSYEPKIQIYDFKSDSWRIVDDTRLDWSIDPPCKGVSVKGNMYWIAHWNNRPEIFIQSFDFSTETFKIVCNLPFECNVLDTAALSSLRGDRLSLLHQSGETMKIEVWITNKLSDEVVSWTKYVDVTSPDLPTLHTDQHLTHPSYFIDKNDNIMVWCEQETEEETDDDVCVSVCMISKDGIVKKQIDAGRCDLCSDNRPFVCGYAYVPSLVPVPE.

Residues Ser-3 to Leu-50 form the F-box domain.

This is Putative F-box protein At3g22650 from Arabidopsis thaliana (Mouse-ear cress).